Here is a 232-residue protein sequence, read N- to C-terminus: Chaperone protein LpfB (232 aa).

A signal peptide spans 1-23 (MNRSRLISCTALVLALIAQNSFA).

It belongs to the periplasmic pilus chaperone family.

Its subcellular location is the periplasm. Required for the biogenesis of long polar fimbria; binds and interact with LpfA. The polypeptide is Chaperone protein LpfB (lpfB) (Salmonella typhimurium (strain LT2 / SGSC1412 / ATCC 700720)).